The chain runs to 218 residues: UPF0319 protein PM0395 (218 aa).

An N-terminal signal peptide occupies residues 1–21; it reads MKFRFAALASVALLTSTVSVA.

The protein belongs to the UPF0319 family.

The protein is UPF0319 protein PM0395 of Pasteurella multocida (strain Pm70).